Here is a 463-residue protein sequence, read N- to C-terminus: NADH dehydrogenase [ubiquinone] iron-sulfur protein 2, mitochondrial (463 aa).

A mitochondrion-targeting transit peptide spans 1–33; sequence MAALRALRCLRGVGAPVLRPGSGIRLPSQPSRG. The residue at position 62 (lysine 62) is an N6-acetyllysine. Arginine 118 carries the post-translational modification Symmetric dimethylarginine. Residues cysteine 326, cysteine 332, and cysteine 347 each contribute to the [4Fe-4S] cluster site.

This sequence belongs to the complex I 49 kDa subunit family. Core subunit of respiratory chain NADH dehydrogenase (Complex I) which is composed of 45 different subunits. Component of the iron-sulfur (IP) fragment of the enzyme. Interacts with NDUFAF3. Interacts with NDUFAF7. Interacts with CERS2. Requires [4Fe-4S] cluster as cofactor. In terms of processing, dimethylation at Arg-118 by NDUFAF7 takes place after NDUFS2 assembles into the complex I, leading to stabilize the early intermediate complex.

The protein localises to the mitochondrion inner membrane. It catalyses the reaction a ubiquinone + NADH + 5 H(+)(in) = a ubiquinol + NAD(+) + 4 H(+)(out). Core subunit of the mitochondrial membrane respiratory chain NADH dehydrogenase (Complex I) which catalyzes electron transfer from NADH through the respiratory chain, using ubiquinone as an electron acceptor. Essential for the catalytic activity and assembly of complex I. Redox-sensitive, critical component of the oxygen-sensing pathway in the pulmonary vasculature which plays a key role in acute pulmonary oxygen-sensing and hypoxic pulmonary vasoconstriction. Plays an important role in carotid body sensing of hypoxia. Essential for glia-like neural stem and progenitor cell proliferation, differentiation and subsequent oligodendrocyte or neuronal maturation. The sequence is that of NADH dehydrogenase [ubiquinone] iron-sulfur protein 2, mitochondrial (Ndufs2) from Mus musculus (Mouse).